The sequence spans 208 residues: Small ribosomal subunit protein eS1 (208 aa).

The protein belongs to the eukaryotic ribosomal protein eS1 family.

In Saccharolobus islandicus (strain Y.N.15.51 / Yellowstone #2) (Sulfolobus islandicus), this protein is Small ribosomal subunit protein eS1.